A 715-amino-acid polypeptide reads, in one-letter code: Fatty acid oxidation complex subunit alpha (715 aa).

Residues 1–189 (MIYQGETLSV…KVGAIDAVVA (189 aa)) are enoyl-CoA hydratase/isomerase. A substrate-binding site is contributed by Asp-296. Residues 311 to 715 (AKATRHAAVL…EMAAQGKTFY (405 aa)) form a 3-hydroxyacyl-CoA dehydrogenase region. NAD(+) is bound by residues Met-325, Asp-344, 401 to 403 (VVE), Lys-408, and Ser-430. The active-site For 3-hydroxyacyl-CoA dehydrogenase activity is His-451. Asn-454 is an NAD(+) binding site. Asn-501 and Tyr-661 together coordinate substrate.

It in the N-terminal section; belongs to the enoyl-CoA hydratase/isomerase family. In the C-terminal section; belongs to the 3-hydroxyacyl-CoA dehydrogenase family. As to quaternary structure, heterotetramer of two alpha chains (FadB) and two beta chains (FadA).

The catalysed reaction is a (3S)-3-hydroxyacyl-CoA + NAD(+) = a 3-oxoacyl-CoA + NADH + H(+). It catalyses the reaction a (3S)-3-hydroxyacyl-CoA = a (2E)-enoyl-CoA + H2O. It carries out the reaction a 4-saturated-(3S)-3-hydroxyacyl-CoA = a (3E)-enoyl-CoA + H2O. The enzyme catalyses (3S)-3-hydroxybutanoyl-CoA = (3R)-3-hydroxybutanoyl-CoA. The catalysed reaction is a (3Z)-enoyl-CoA = a 4-saturated (2E)-enoyl-CoA. It catalyses the reaction a (3E)-enoyl-CoA = a 4-saturated (2E)-enoyl-CoA. The protein operates within lipid metabolism; fatty acid beta-oxidation. Involved in the aerobic and anaerobic degradation of long-chain fatty acids via beta-oxidation cycle. Catalyzes the formation of 3-oxoacyl-CoA from enoyl-CoA via L-3-hydroxyacyl-CoA. It can also use D-3-hydroxyacyl-CoA and cis-3-enoyl-CoA as substrate. The sequence is that of Fatty acid oxidation complex subunit alpha from Aeromonas salmonicida (strain A449).